The following is a 212-amino-acid chain: Uridine kinase (212 aa).

Residue 13 to 20 coordinates ATP; sequence GASASGKS.

This sequence belongs to the uridine kinase family.

The protein localises to the cytoplasm. The catalysed reaction is uridine + ATP = UMP + ADP + H(+). It catalyses the reaction cytidine + ATP = CMP + ADP + H(+). Its pathway is pyrimidine metabolism; CTP biosynthesis via salvage pathway; CTP from cytidine: step 1/3. The protein operates within pyrimidine metabolism; UMP biosynthesis via salvage pathway; UMP from uridine: step 1/1. This Shewanella piezotolerans (strain WP3 / JCM 13877) protein is Uridine kinase.